A 261-amino-acid polypeptide reads, in one-letter code: Undecaprenyl-diphosphatase (261 aa).

8 helical membrane passes run 9 to 31, 46 to 66, 80 to 100, 102 to 122, 137 to 157, 180 to 200, 209 to 229, and 240 to 260; these read ALLLGVVEGLTEFLPVSSTGHLT, FLKTFLVAIQLGAILAVLLLY, IAVAFVPTGVIGFLFYPLIKG, ILGNDAVVAFFLFFVGAVLLF, ALPLARVAWIGVFQGLAALFP, AEFSFLLALPTMFAAVGYDLW, GGWSLLLLGFLAALVTALVTV, and GFRPFALYRMALAAVYAFFFL.

Belongs to the UppP family.

It is found in the cell inner membrane. It carries out the reaction di-trans,octa-cis-undecaprenyl diphosphate + H2O = di-trans,octa-cis-undecaprenyl phosphate + phosphate + H(+). Catalyzes the dephosphorylation of undecaprenyl diphosphate (UPP). Confers resistance to bacitracin. The protein is Undecaprenyl-diphosphatase of Thermus thermophilus (strain ATCC 27634 / DSM 579 / HB8).